The primary structure comprises 533 residues: MSSQVEHPAGGYKKLFETVEELSSPLTAHVTGRIPLWLTGSLLRCGPGLFEVGSEPFYHLFDGQALLHKFDFKEGHVTYHRRFIRTDAYVRAMTEKRIVITEFGTCAFPDPCKNIFSRFFSYFRGVEVTDNALVNIYPVGEDYYACTETNFITKVNPETLETIKQVDLCNYVSVNGATAHPHIENDGTVYNIGNCFGKNFSIAYNIVKIPPLQADKEDPISKSEIVVQFPCSDRFKPSYVHSFGLTPNYIVFVETPVKINLFKFLSSWSLWGANYMDCFESNETMGVWLHIADKKRKKYINNKYRTSPFNLFHHINTYEDHEFLIVDLCCWKGFEFVYNYLYLANLRENWEEVKKNARKAPQPEVRRYVLPLNIDKADTGKNLVTLPNTTATAILCSDETIWLEPEVLFSGPRQAFEFPQINYQKYGGKPYTYAYGLGLNHFVPDRLCKLNVKTKETWVWQEPDSYPSEPIFVSHPDALEEDDGVVLSVVVSPGAGQKPAYLLILNAKDLSEVARAEVEINIPVTFHGLFKKS.

An N-acetylserine modification is found at serine 2. 2 positions are modified to phosphothreonine: threonine 101 and threonine 105. A lipid anchor (S-palmitoyl cysteine; in membrane form) is attached at cysteine 112. Lysine 113 bears the N6-acetyllysine mark. Serine 117 is subject to Phosphoserine. A Fe cation-binding site is contributed by histidine 180. Cysteine 231 carries the S-palmitoyl cysteine; in membrane form lipid modification. Fe cation-binding residues include histidine 241 and histidine 313. 2 S-palmitoyl cysteine; in membrane form lipidation sites follow: cysteine 329 and cysteine 330. A Fe cation-binding site is contributed by histidine 527.

This sequence belongs to the carotenoid oxygenase family. In terms of assembly, interacts with MYO7A; this mediates light-dependent intracellular transport of RPE65. Fe(2+) is required as a cofactor. Palmitoylation by LRAT regulates ligand binding specificity; the palmitoylated form (membrane form) specifically binds all-trans-retinyl-palmitate, while the soluble unpalmitoylated form binds all-trans-retinol (vitamin A). As to expression, retinal pigment epithelium specific.

The protein localises to the cytoplasm. It is found in the cell membrane. Its subcellular location is the microsome membrane. The enzyme catalyses an all-trans-retinyl ester + H2O = 11-cis-retinol + a fatty acid + H(+). It catalyses the reaction lutein = (3R,3'S)-zeaxanthin. The catalysed reaction is all-trans-retinyl hexadecanoate + H2O = 11-cis-retinol + hexadecanoate + H(+). Critical isomerohydrolase in the retinoid cycle involved in regeneration of 11-cis-retinal, the chromophore of rod and cone opsins. Catalyzes the cleavage and isomerization of all-trans-retinyl fatty acid esters to 11-cis-retinol which is further oxidized by 11-cis retinol dehydrogenase to 11-cis-retinal for use as visual chromophore. Essential for the production of 11-cis retinal for both rod and cone photoreceptors. Also capable of catalyzing the isomerization of lutein to meso-zeaxanthin an eye-specific carotenoid. The soluble form binds vitamin A (all-trans-retinol), making it available for LRAT processing to all-trans-retinyl ester. The membrane form, palmitoylated by LRAT, binds all-trans-retinyl esters, making them available for IMH (isomerohydrolase) processing to all-cis-retinol. The soluble form is regenerated by transferring its palmitoyl groups onto 11-cis-retinol, a reaction catalyzed by LRAT. The sequence is that of Retinoid isomerohydrolase (RPE65) from Bos taurus (Bovine).